A 303-amino-acid polypeptide reads, in one-letter code: mRNA-capping enzyme subunit beta (303 aa).

It belongs to the fungal TPase family. Heterodimer. The mRNA-capping enzyme is composed of two separate chains alpha and beta, respectively a mRNA guanylyltransferase and an mRNA 5'-triphosphate monophosphatase. The cofactor is Mg(2+).

The protein resides in the nucleus. It catalyses the reaction a 5'-end triphospho-ribonucleoside in mRNA + H2O = a 5'-end diphospho-ribonucleoside in mRNA + phosphate + H(+). In terms of biological role, first step of mRNA capping. Converts the 5'-triphosphate end of a nascent mRNA chain into a diphosphate end. This Schizosaccharomyces pombe (strain 972 / ATCC 24843) (Fission yeast) protein is mRNA-capping enzyme subunit beta (pct1).